Here is a 236-residue protein sequence, read N- to C-terminus: Peptidase E (236 aa).

Active-site charge relay system residues include Ser-122, Asp-137, and His-159.

It belongs to the peptidase S51 family.

It is found in the cytoplasm. It catalyses the reaction Dipeptidase E catalyzes the hydrolysis of dipeptides Asp-|-Xaa. It does not act on peptides with N-terminal Glu, Asn or Gln, nor does it cleave isoaspartyl peptides.. Its function is as follows. Hydrolyzes dipeptides containing N-terminal aspartate residues. May play a role in allowing the cell to use peptide aspartate to spare carbon otherwise required for the synthesis of the aspartate family of amino acids. This is Peptidase E from Shewanella sp. (strain MR-4).